The sequence spans 501 residues: ATP synthase subunit alpha (501 aa).

Position 169–176 (169–176 (GDRQTGKT)) interacts with ATP.

The protein belongs to the ATPase alpha/beta chains family. As to quaternary structure, F-type ATPases have 2 components, CF(1) - the catalytic core - and CF(0) - the membrane proton channel. CF(1) has five subunits: alpha(3), beta(3), gamma(1), delta(1), epsilon(1). CF(0) has three main subunits: a(1), b(2) and c(9-12). The alpha and beta chains form an alternating ring which encloses part of the gamma chain. CF(1) is attached to CF(0) by a central stalk formed by the gamma and epsilon chains, while a peripheral stalk is formed by the delta and b chains.

It is found in the cell membrane. It catalyses the reaction ATP + H2O + 4 H(+)(in) = ADP + phosphate + 5 H(+)(out). In terms of biological role, produces ATP from ADP in the presence of a proton gradient across the membrane. The alpha chain is a regulatory subunit. This is ATP synthase subunit alpha from Streptococcus equi subsp. equi (strain 4047).